The primary structure comprises 323 residues: L-lactate dehydrogenase (323 aa).

The NAD(+) site is built by V12, D33, and Y65. Substrate-binding positions include R94 and 126-129 (NPCD). T149 is an NAD(+) binding site. Residue 154–157 (ETMR) participates in substrate binding. H181 (proton acceptor) is an active-site residue. Residue T234 participates in substrate binding.

It belongs to the LDH/MDH superfamily. LDH family. In terms of assembly, homotetramer.

Its subcellular location is the cytoplasm. It catalyses the reaction (S)-lactate + NAD(+) = pyruvate + NADH + H(+). The protein operates within fermentation; pyruvate fermentation to lactate; (S)-lactate from pyruvate: step 1/1. Functionally, catalyzes the conversion of lactate to pyruvate. The chain is L-lactate dehydrogenase from Mycoplasmoides gallisepticum (strain R(low / passage 15 / clone 2)) (Mycoplasma gallisepticum).